The following is a 290-amino-acid chain: Protease HtpX (290 aa).

2 helical membrane-spanning segments follow: residues 12 to 32 (IAVM…GLLA) and 42 to 62 (ALLV…LLIS). A Zn(2+)-binding site is contributed by histidine 147. Residue glutamate 148 is part of the active site. Histidine 151 contacts Zn(2+). Transmembrane regions (helical) follow at residues 162–182 (LIQG…GHVV) and 197–217 (FWIV…MIVM). Glutamate 224 contacts Zn(2+).

The protein belongs to the peptidase M48B family. Zn(2+) is required as a cofactor.

Its subcellular location is the cell inner membrane. In Pseudoalteromonas atlantica (strain T6c / ATCC BAA-1087), this protein is Protease HtpX.